A 151-amino-acid polypeptide reads, in one-letter code: MHALQAKILDPRIGTEFPLPQYATPGSAGLDLRAMLQEDIVIKPGETVLIPTGLSVYIGDPNLAALILPRSGMGHKHGIVLGNLVGLIDSDYQGPLMVSCWNRGQTEFTMPVGERLAQLVLVPVVQAHFEMVEEFVETERGTGGFGHSGTK.

Substrate is bound by residues 70–72 (RSG), N83, 87–89 (LID), and M97.

The protein belongs to the dUTPase family. Requires Mg(2+) as cofactor.

It catalyses the reaction dUTP + H2O = dUMP + diphosphate + H(+). The protein operates within pyrimidine metabolism; dUMP biosynthesis; dUMP from dCTP (dUTP route): step 2/2. Its function is as follows. This enzyme is involved in nucleotide metabolism: it produces dUMP, the immediate precursor of thymidine nucleotides and it decreases the intracellular concentration of dUTP so that uracil cannot be incorporated into DNA. This chain is Deoxyuridine 5'-triphosphate nucleotidohydrolase, found in Pseudomonas fluorescens (strain Pf0-1).